Consider the following 349-residue polypeptide: tRNA N6-adenosine threonylcarbamoyltransferase (349 aa).

Fe cation contacts are provided by His-111 and His-115. Residues 134–138 (LVSGG), Asp-167, Gly-180, Asp-184, and Asn-279 contribute to the substrate site. Asp-307 contributes to the Fe cation binding site.

This sequence belongs to the KAE1 / TsaD family. It depends on Fe(2+) as a cofactor.

The protein resides in the cytoplasm. It carries out the reaction L-threonylcarbamoyladenylate + adenosine(37) in tRNA = N(6)-L-threonylcarbamoyladenosine(37) in tRNA + AMP + H(+). Its function is as follows. Required for the formation of a threonylcarbamoyl group on adenosine at position 37 (t(6)A37) in tRNAs that read codons beginning with adenine. Is involved in the transfer of the threonylcarbamoyl moiety of threonylcarbamoyl-AMP (TC-AMP) to the N6 group of A37, together with TsaE and TsaB. TsaD likely plays a direct catalytic role in this reaction. In Nostoc punctiforme (strain ATCC 29133 / PCC 73102), this protein is tRNA N6-adenosine threonylcarbamoyltransferase.